The following is a 412-amino-acid chain: NADH-quinone oxidoreductase subunit D (412 aa).

The protein belongs to the complex I 49 kDa subunit family. In terms of assembly, NDH-1 is composed of 14 different subunits. Subunits NuoB, C, D, E, F, and G constitute the peripheral sector of the complex.

The protein resides in the cell inner membrane. The catalysed reaction is a quinone + NADH + 5 H(+)(in) = a quinol + NAD(+) + 4 H(+)(out). Its function is as follows. NDH-1 shuttles electrons from NADH, via FMN and iron-sulfur (Fe-S) centers, to quinones in the respiratory chain. The immediate electron acceptor for the enzyme in this species is believed to be a menaquinone. Couples the redox reaction to proton translocation (for every two electrons transferred, four hydrogen ions are translocated across the cytoplasmic membrane), and thus conserves the redox energy in a proton gradient. The protein is NADH-quinone oxidoreductase subunit D of Flavobacterium johnsoniae (strain ATCC 17061 / DSM 2064 / JCM 8514 / BCRC 14874 / CCUG 350202 / NBRC 14942 / NCIMB 11054 / UW101) (Cytophaga johnsonae).